We begin with the raw amino-acid sequence, 406 residues long: Tryptophan synthase beta chain (406 aa).

Residue K99 is modified to N6-(pyridoxal phosphate)lysine.

Belongs to the TrpB family. In terms of assembly, tetramer of two alpha and two beta chains. Pyridoxal 5'-phosphate is required as a cofactor.

The enzyme catalyses (1S,2R)-1-C-(indol-3-yl)glycerol 3-phosphate + L-serine = D-glyceraldehyde 3-phosphate + L-tryptophan + H2O. Its pathway is amino-acid biosynthesis; L-tryptophan biosynthesis; L-tryptophan from chorismate: step 5/5. The beta subunit is responsible for the synthesis of L-tryptophan from indole and L-serine. This Methylobacterium sp. (strain 4-46) protein is Tryptophan synthase beta chain.